The sequence spans 280 residues: MRKNVVRYLRCPHCAAPLRSSDRTLRCENGHTFDVARQGYVNLLRRPTKLAADTTDMVAARAALLDSGHYAPLTERLAGTARRAAGAGAPDCVVDIGGGTGHHLARVLEEFEDAEGLLLDMSKPAVRRAARAHPRASSAVADVWDTLPLRDGAAAMALNVFAPRNPPEIRRILRPGGTLLVVTPQQDHLAELVDALGLLRVRDHKEGRLAEQLAPHFEAVGQERLRTTLRLDHDALGRVVAMGPSSWHQDPDELARRIAELPGIHEVTLSVTFTVCRPLP.

Zn(2+) contacts are provided by cysteine 11, cysteine 14, cysteine 27, and histidine 31. S-adenosyl-L-methionine-binding positions include tyrosine 70, 100 to 101, and histidine 188; that span reads TG.

It belongs to the methyltransferase superfamily. RlmA family.

It carries out the reaction guanosine(748) in 23S rRNA + S-adenosyl-L-methionine = N(1)-methylguanosine(748) in 23S rRNA + S-adenosyl-L-homocysteine + H(+). Functionally, specifically methylates the guanosine in position 748 of 23S rRNA. Confers resistance to the macrolide antibiotic tylosine. This Streptomyces fradiae (Streptomyces roseoflavus) protein is 23S rRNA (guanine(748)-N(1))-methyltransferase (rlmAII).